The chain runs to 622 residues: DNA polymerase II small subunit (622 aa).

The interval 76–113 is disordered; that stretch reads ISTGEGSQKVPDHEELEKITNESSVESSISTGETPKTE. Over residues 85–95 the composition is skewed to basic and acidic residues; sequence VPDHEELEKIT. Polar residues predominate over residues 96 to 109; it reads NESSVESSISTGET.

This sequence belongs to the DNA polymerase delta/II small subunit family. Heterodimer of a large subunit and a small subunit.

The enzyme catalyses DNA(n) + a 2'-deoxyribonucleoside 5'-triphosphate = DNA(n+1) + diphosphate. It catalyses the reaction Exonucleolytic cleavage in the 3'- to 5'-direction to yield nucleoside 5'-phosphates.. In terms of biological role, possesses two activities: a DNA synthesis (polymerase) and an exonucleolytic activity that degrades single-stranded DNA in the 3' to 5' direction. Has a template-primer preference which is characteristic of a replicative DNA polymerase. The polypeptide is DNA polymerase II small subunit (polB) (Pyrococcus horikoshii (strain ATCC 700860 / DSM 12428 / JCM 9974 / NBRC 100139 / OT-3)).